Here is a 249-residue protein sequence, read N- to C-terminus: Type III pantothenate kinase (249 aa).

Residue 6–13 (DVGNTHTT) coordinates ATP. 101-104 (GADR) provides a ligand contact to substrate. Asp103 acts as the Proton acceptor in catalysis. Asp123 lines the K(+) pocket. Thr126 is a binding site for ATP. Thr177 contacts substrate.

Belongs to the type III pantothenate kinase family. Homodimer. NH4(+) serves as cofactor. It depends on K(+) as a cofactor.

Its subcellular location is the cytoplasm. It catalyses the reaction (R)-pantothenate + ATP = (R)-4'-phosphopantothenate + ADP + H(+). It participates in cofactor biosynthesis; coenzyme A biosynthesis; CoA from (R)-pantothenate: step 1/5. Functionally, catalyzes the phosphorylation of pantothenate (Pan), the first step in CoA biosynthesis. The chain is Type III pantothenate kinase from Thermosipho africanus (strain TCF52B).